The sequence spans 699 residues: MVRFFGLNKEKNEEKENTDLPADNEQNAAETSSSNVSGNEERIDPNSRDTNPENANNDDASTTFGSSIQSSSIFSRGRMTYGTGASSSMATSEMRSHSSGHSRSKNSKNLQGFKDVGKPLRAVSFLNPVKEEESQDTQNTLDVSSSTSSTLATSGNARENSFTSRRSITLEYIHKSLSELEENLVDIMDDIHQDVISISKAVIEAIEYFKEFLPTTRDRIPYRISLEKSSSLRKINKIVLHFLDNLLVSDAFSNSRSILLRRFYFFLKKLNLITDDDLISESGVLPCLSVFCIGSHCNLPSMDKLGMILDELTKMDSSIISDQEGAFIAPILRGITPKSSILTIMFGLPNLQHEHYEMIKVLYSLFPDVHMYCVKDYIKKAASAVGSIPSHTAATIDTIAPTKFQFSPPYAVSENPLELPISMSLSTETSAKITGTLGGYLFPQTGSDEKFSQFASCSFAITCAHVVLSEKQDYPNVMVPSNVLQTSYKKVLTKESDRYPDGSVEKTAFLEEVQRIDQNLNWQKSNKFGQVVWGERAIVDHRLSDFAIIKVNSSFKCQNTLGNGLKSFPDPTLRFQNLHVKRKIFKMKPGMKVFKIGASTGYTSGELNSTKLVYWADGKLQSSEFVVASPTPLFASAGDSGAWILTKLEDRLGLGLVGMLHSYDGEQRQFGLFTPIGDILERLHAVTKIQWDIDPQLDG.

2 disordered regions span residues 1–113 (MVRF…LQGF) and 129–158 (VKEE…GNAR). Positions 1-381 (MVRFFGLNKE…YCVKDYIKKA (381 aa)) are excised as a propeptide. Positions 8–18 (NKEKNEEKENT) are enriched in basic and acidic residues. The segment covering 24 to 38 (NEQNAAETSSSNVSG) has biased composition (polar residues). Positions 39–51 (NEERIDPNSRDTN) are enriched in basic and acidic residues. The segment covering 61–78 (STTFGSSIQSSSIFSRGR) has biased composition (low complexity). The span at 83-93 (TGASSSMATSE) shows a compositional bias: polar residues. Residues 144–154 (SSSTSSTLATS) show a composition bias toward low complexity. The serine protease stretch occupies residues 459–699 (FAITCAHVVL…QWDIDPQLDG (241 aa)). Residues His-465, Asp-545, and Ser-640 each act as charge relay system in the active site.

Belongs to the peptidase S64 family. In terms of assembly, component of the plasma membrane SPS (SSY1-PTR3-SSY5) amino acid sensor complex. The propeptide is autoproteolytically cleaved from the catalytic domain but remains associated, forming an inactive protease complex. This processing occurs even in the absence of signaling.

It is found in the cell membrane. In terms of biological role, protease component of the SPS-sensor system, which regulates the expression of several amino acid-metabolizing enzymes and amino acid- and peptide-permeases in response to extracellular amino acid levels by controlling the activity of two transcription factors, STP1 and STP2. Catalyzes the activation of these transcription factors, which are synthesized as latent cytoplasmic precursors, by proteolytic removal of an N-terminal inhibitory domain containing cytoplasmic retention motifs. SSY5 binds as an inactive protease complex to STP1. In response to extracellular amino acids and dependent on the other SPS-sensor components, the inhibitory propeptide is induced to dissociate, and thereby enables the catalytic domain to process STP1. The sequence is that of SPS-sensor serine protease component SSY5 (SSY5) from Saccharomyces cerevisiae (strain AWRI1631) (Baker's yeast).